The following is a 179-amino-acid chain: ATP synthase subunit delta (179 aa).

It belongs to the ATPase delta chain family. In terms of assembly, F-type ATPases have 2 components, F(1) - the catalytic core - and F(0) - the membrane proton channel. F(1) has five subunits: alpha(3), beta(3), gamma(1), delta(1), epsilon(1). F(0) has three main subunits: a(1), b(2) and c(10-14). The alpha and beta chains form an alternating ring which encloses part of the gamma chain. F(1) is attached to F(0) by a central stalk formed by the gamma and epsilon chains, while a peripheral stalk is formed by the delta and b chains.

It is found in the cell inner membrane. Its function is as follows. F(1)F(0) ATP synthase produces ATP from ADP in the presence of a proton or sodium gradient. F-type ATPases consist of two structural domains, F(1) containing the extramembraneous catalytic core and F(0) containing the membrane proton channel, linked together by a central stalk and a peripheral stalk. During catalysis, ATP synthesis in the catalytic domain of F(1) is coupled via a rotary mechanism of the central stalk subunits to proton translocation. In terms of biological role, this protein is part of the stalk that links CF(0) to CF(1). It either transmits conformational changes from CF(0) to CF(1) or is implicated in proton conduction. This is ATP synthase subunit delta from Thermosipho melanesiensis (strain DSM 12029 / CIP 104789 / BI429).